The following is a 257-amino-acid chain: Imidazole glycerol phosphate synthase subunit HisF (257 aa).

Catalysis depends on residues Asp-12 and Asp-131.

This sequence belongs to the HisA/HisF family. In terms of assembly, heterodimer of HisH and HisF.

It localises to the cytoplasm. The enzyme catalyses 5-[(5-phospho-1-deoxy-D-ribulos-1-ylimino)methylamino]-1-(5-phospho-beta-D-ribosyl)imidazole-4-carboxamide + L-glutamine = D-erythro-1-(imidazol-4-yl)glycerol 3-phosphate + 5-amino-1-(5-phospho-beta-D-ribosyl)imidazole-4-carboxamide + L-glutamate + H(+). The protein operates within amino-acid biosynthesis; L-histidine biosynthesis; L-histidine from 5-phospho-alpha-D-ribose 1-diphosphate: step 5/9. IGPS catalyzes the conversion of PRFAR and glutamine to IGP, AICAR and glutamate. The HisF subunit catalyzes the cyclization activity that produces IGP and AICAR from PRFAR using the ammonia provided by the HisH subunit. The protein is Imidazole glycerol phosphate synthase subunit HisF of Saccharophagus degradans (strain 2-40 / ATCC 43961 / DSM 17024).